Reading from the N-terminus, the 276-residue chain is Phosphate import ATP-binding protein PstB (276 aa).

One can recognise an ABC transporter domain in the interval 23-271 (VNNKNIVYDT…PSDQRTEDYI (249 aa)). Position 62–69 (62–69 (GPSGCGKS)) interacts with ATP.

Belongs to the ABC transporter superfamily. Phosphate importer (TC 3.A.1.7) family. As to quaternary structure, the complex is composed of two ATP-binding proteins (PstB), two transmembrane proteins (PstC and PstA) and a solute-binding protein (PstS).

Its subcellular location is the cell membrane. It carries out the reaction phosphate(out) + ATP + H2O = ADP + 2 phosphate(in) + H(+). In terms of biological role, part of the ABC transporter complex PstSACB involved in phosphate import. Responsible for energy coupling to the transport system. This Oceanobacillus iheyensis (strain DSM 14371 / CIP 107618 / JCM 11309 / KCTC 3954 / HTE831) protein is Phosphate import ATP-binding protein PstB.